The primary structure comprises 693 residues: Elongation factor G (693 aa).

Residues 8 to 282 (EKTRNIGIMA…AVIDYLPSPL (275 aa)) enclose the tr-type G domain. GTP contacts are provided by residues 17 to 24 (AHVDAGKT), 81 to 85 (DTPGH), and 135 to 138 (NKMD).

It belongs to the TRAFAC class translation factor GTPase superfamily. Classic translation factor GTPase family. EF-G/EF-2 subfamily.

Its subcellular location is the cytoplasm. Its function is as follows. Catalyzes the GTP-dependent ribosomal translocation step during translation elongation. During this step, the ribosome changes from the pre-translocational (PRE) to the post-translocational (POST) state as the newly formed A-site-bound peptidyl-tRNA and P-site-bound deacylated tRNA move to the P and E sites, respectively. Catalyzes the coordinated movement of the two tRNA molecules, the mRNA and conformational changes in the ribosome. The polypeptide is Elongation factor G (Streptococcus suis (strain 05ZYH33)).